The sequence spans 161 residues: MKLHELHDNPGANRKKKRVARGPGSGKGKTAGRGIKGQTSRSGVALNGYEGGQMPLYRRLPKRGFSKPNRLEFAVVNLGQLQAFVDAGKLDAKADVTEDALVAAGVIRRKLDGVRVLAKGEIKAALNLSVAGASKAAVEAIEKAGGKITVSRPAKEAAAAE.

The disordered stretch occupies residues 1–47; the sequence is MKLHELHDNPGANRKKKRVARGPGSGKGKTAGRGIKGQTSRSGVALN. Positions 23-35 are enriched in gly residues; the sequence is PGSGKGKTAGRGI.

Belongs to the universal ribosomal protein uL15 family. In terms of assembly, part of the 50S ribosomal subunit.

Binds to the 23S rRNA. The sequence is that of Large ribosomal subunit protein uL15 from Paracoccus denitrificans (strain Pd 1222).